The following is a 197-amino-acid chain: Phospholipid hydroperoxide glutathione peroxidase (197 aa).

At S40 the chain carries Phosphoserine. The active site involves U73. U73 is a non-standard amino acid (selenocysteine).

It belongs to the glutathione peroxidase family. In terms of assembly, monomer. Has a tendency to form higher mass oligomers. Interacts with FUNDC1; this interaction promotes GPX4 recruitment into mitochondria through TOM/TIM complex where it is degraded by mitophagy.

The protein resides in the mitochondrion. It localises to the cytoplasm. The enzyme catalyses a hydroperoxy polyunsaturated fatty acid + 2 glutathione = a hydroxy polyunsaturated fatty acid + glutathione disulfide + H2O. It carries out the reaction 2 glutathione + H2O2 = glutathione disulfide + 2 H2O. It catalyses the reaction tert-butyl hydroperoxide + 2 glutathione = tert-butanol + glutathione disulfide + H2O. The catalysed reaction is cumene hydroperoxide + 2 glutathione = 2-phenylpropan-2-ol + glutathione disulfide + H2O. The enzyme catalyses (9S)-hydroperoxy-(10E,12Z)-octadecadienoate + 2 glutathione = (9S)-hydroxy-(10E,12Z)-octadecadienoate + glutathione disulfide + H2O. It carries out the reaction (13S)-hydroperoxy-(9Z,11E)-octadecadienoate + 2 glutathione = (13S)-hydroxy-(9Z,11E)-octadecadienoate + glutathione disulfide + H2O. It catalyses the reaction (5S)-hydroperoxy-(6E,8Z,11Z,14Z)-eicosatetraenoate + 2 glutathione = (5S)-hydroxy-(6E,8Z,11Z,14Z)-eicosatetraenoate + glutathione disulfide + H2O. The catalysed reaction is (12R)-hydroperoxy-(5Z,8Z,10E,14Z)-eicosatetraenoate + 2 glutathione = (12R)-hydroxy-(5Z,8Z,10E,14Z)-eicosatetraenoate + glutathione disulfide + H2O. The enzyme catalyses (12S)-hydroperoxy-(5Z,8Z,10E,14Z)-eicosatetraenoate + 2 glutathione = (12S)-hydroxy-(5Z,8Z,10E,14Z)-eicosatetraenoate + glutathione disulfide + H2O. It carries out the reaction (15S)-hydroperoxy-(5Z,8Z,11Z,13E)-eicosatetraenoate + 2 glutathione = (15S)-hydroxy-(5Z,8Z,11Z,13E)-eicosatetraenoate + glutathione disulfide + H2O. It catalyses the reaction (5S)-hydroperoxy-(6E,8Z,11Z,14Z,17Z)-eicosapentaenoate + 2 glutathione = (5S)-hydroxy-(6E,8Z,11Z,14Z,17Z)-eicosapentaenoate + glutathione disulfide + H2O. The catalysed reaction is (12S)-hydroperoxy-(5Z,8Z,10E,14Z,17Z)-eicosapentaenoate + 2 glutathione = (12S)-hydroxy-(5Z,8Z,10E,14Z,17Z)-eicosapentaenoate + glutathione disulfide + H2O. The enzyme catalyses (15S)-hydroperoxy-(5Z,8Z,11Z,13E,17Z)-eicosapentaenoate + 2 glutathione = (15S)-hydroxy-(5Z,8Z,11Z,13E,17Z)-eicosapentaenoate + glutathione disulfide + H2O. It carries out the reaction (15S)-hydroperoxy-(11Z,13E)-eicosadienoate + 2 glutathione = (15S)-hydroxy-(11Z,13E)-eicosadienoate + glutathione disulfide + H2O. It catalyses the reaction (17S)-hydroperoxy-(4Z,7Z,10Z,13Z,15E,19Z)-docosahexaenoate + 2 glutathione = (17S)-hydroxy-(4Z,7Z,10Z,13Z,15E,19Z)-docosahexaenoate + glutathione disulfide + H2O. The catalysed reaction is a hydroperoxy-1,2-diacyl-glycero-3-phosphocholine + 2 glutathione = a hydroxy-1,2-diacyl-glycero-3-phosphocholine + glutathione disulfide + H2O. Its function is as follows. Essential antioxidant peroxidase that directly reduces phospholipid hydroperoxide even if they are incorporated in membranes and lipoproteins. Can also reduce fatty acid hydroperoxide, cholesterol hydroperoxide and thymine hydroperoxide. Plays a key role in protecting cells from oxidative damage by preventing membrane lipid peroxidation. Required to prevent cells from ferroptosis, a non-apoptotic cell death resulting from an iron-dependent accumulation of lipid reactive oxygen species. The presence of selenocysteine (Sec) versus Cys at the active site is essential for life: it provides resistance to overoxidation and prevents cells against ferroptosis. The presence of Sec at the active site is also essential for the survival of a specific type of parvalbumin-positive interneurons, thereby preventing against fatal epileptic seizures. May be required to protect cells from the toxicity of ingested lipid hydroperoxides. Required for normal sperm development and male fertility. Essential for maturation and survival of photoreceptor cells. Plays a role in a primary T-cell response to viral and parasitic infection by protecting T-cells from ferroptosis and by supporting T-cell expansion. Plays a role of glutathione peroxidase in platelets in the arachidonic acid metabolism. Reduces hydroperoxy ester lipids formed by a 15-lipoxygenase that may play a role as down-regulator of the cellular 15-lipoxygenase pathway. Can also reduce small soluble hydroperoxides such as H2O2, cumene hydroperoxide and tert-butyl hydroperoxide. This Pongo pygmaeus (Bornean orangutan) protein is Phospholipid hydroperoxide glutathione peroxidase.